The following is a 200-amino-acid chain: Holliday junction branch migration complex subunit RuvA (200 aa).

A domain I region spans residues 1-65 (MYEYIKGTLT…ETEHVLYGFS (65 aa)). The interval 66–144 (SRAERECFRL…TLMPLYLEEP (79 aa)) is domain II. The tract at residues 145-149 (VVPSS) is flexible linker. The domain III stretch occupies residues 150-200 (TANSSFKEGIGALMNLGFSRLAADRMMTEAVKELSEEASVAELLPIALRKS).

This sequence belongs to the RuvA family. As to quaternary structure, homotetramer. Forms an RuvA(8)-RuvB(12)-Holliday junction (HJ) complex. HJ DNA is sandwiched between 2 RuvA tetramers; dsDNA enters through RuvA and exits via RuvB. An RuvB hexamer assembles on each DNA strand where it exits the tetramer. Each RuvB hexamer is contacted by two RuvA subunits (via domain III) on 2 adjacent RuvB subunits; this complex drives branch migration. In the full resolvosome a probable DNA-RuvA(4)-RuvB(12)-RuvC(2) complex forms which resolves the HJ.

It localises to the cytoplasm. In terms of biological role, the RuvA-RuvB-RuvC complex processes Holliday junction (HJ) DNA during genetic recombination and DNA repair, while the RuvA-RuvB complex plays an important role in the rescue of blocked DNA replication forks via replication fork reversal (RFR). RuvA specifically binds to HJ cruciform DNA, conferring on it an open structure. The RuvB hexamer acts as an ATP-dependent pump, pulling dsDNA into and through the RuvAB complex. HJ branch migration allows RuvC to scan DNA until it finds its consensus sequence, where it cleaves and resolves the cruciform DNA. This chain is Holliday junction branch migration complex subunit RuvA, found in Chlamydia trachomatis serovar L2 (strain ATCC VR-902B / DSM 19102 / 434/Bu).